Reading from the N-terminus, the 328-residue chain is DNA-directed RNA polymerase subunit alpha (328 aa).

Positions Met-1–Ser-231 are alpha N-terminal domain (alpha-NTD). Residues Asp-247 to Gly-328 are alpha C-terminal domain (alpha-CTD).

It belongs to the RNA polymerase alpha chain family. As to quaternary structure, homodimer. The RNAP catalytic core consists of 2 alpha, 1 beta, 1 beta' and 1 omega subunit. When a sigma factor is associated with the core the holoenzyme is formed, which can initiate transcription.

The enzyme catalyses RNA(n) + a ribonucleoside 5'-triphosphate = RNA(n+1) + diphosphate. Functionally, DNA-dependent RNA polymerase catalyzes the transcription of DNA into RNA using the four ribonucleoside triphosphates as substrates. The sequence is that of DNA-directed RNA polymerase subunit alpha from Chlorobaculum tepidum (strain ATCC 49652 / DSM 12025 / NBRC 103806 / TLS) (Chlorobium tepidum).